The sequence spans 206 residues: mRNA-decapping protein D9 (206 aa).

In terms of domain architecture, Nudix hydrolase spans Lys-23–Lys-206. Positions Gly-104–Asp-125 match the Nudix box motif. Glu-110 provides a ligand contact to Mg(2+). Glu-119 acts as the Nucleophile in catalysis. Residues Glu-123 and Asp-144 each contribute to the Mg(2+) site.

The protein belongs to the Nudix hydrolase family. Mg(2+) is required as a cofactor. Requires Mn(2+) as cofactor.

Its function is as follows. Decapping enzyme required for the removal of the 5'-end m7GpppN cap tethered to viral and host mRNAs to allow their decay in cells. May therefore accelerate viral and cellular mRNA turnover to eliminate competing host mRNAs and allow stage-specific synthesis of viral proteins. Acceleration of the turnover of cellular transcripts may even promote the shutoff of host protein synthesis. Does not cleave unmethylated RNAs or RNAs shorter than 24 nucleotides. The protein is mRNA-decapping protein D9 of Oryctolagus cuniculus (Rabbit).